We begin with the raw amino-acid sequence, 234 residues long: Opacity protein opA56 (234 aa).

A1 is a signal peptide.

It belongs to the opacity porin family.

It localises to the cell outer membrane. Functionally, implicated in a number of adherence functions. OPA proteins are implicated in pathogenesis and are subject to phase variation. The sequence is that of Opacity protein opA56 (opaF) from Neisseria gonorrhoeae.